A 478-amino-acid chain; its full sequence is MKVYETVIGLEVHVELATKSKIFCGCTTQFGGEVNAHCCPICMGMPGTLPVLNKKVVEFAIAAGLAMNCDITKNCKFDRKNYFYPDLPKAYQVSQLYLPICRNGSIEIEVDGIKKSIGIHEIHMEEDAGKLVHDPWEDCTLVDYNRCGVPLIEIVSEPDMRSAEEVIAYLEKLKLILQYLGVSDCKMQEGSLRADINLSIREVGEPEFGTRTEMKNMNSFKAIARAIEGERKRQIELLEDGKKVIQETRRWDDNKDTSFAMRSKEDAQDYRYFPEPDLVPMEISEEWLTEIKGREPELRDAKMLRYVKEYEIPEYDAGIITGSKNLADIFEATVSLCNKPKEVSNWLMVETMRLLKESEQDAEELKLSPANFASLIELIDAGKINRTIAKEVFEQIFKANVDPNAYIEEHGLGMVSDDGVVRSTIENILKENVQSVSDYKNGKDKAFGFLVGQTMKAMRGKANPSVINEILRELLSKA.

The protein belongs to the GatB/GatE family. GatB subfamily. As to quaternary structure, heterotrimer of A, B and C subunits.

The enzyme catalyses L-glutamyl-tRNA(Gln) + L-glutamine + ATP + H2O = L-glutaminyl-tRNA(Gln) + L-glutamate + ADP + phosphate + H(+). It carries out the reaction L-aspartyl-tRNA(Asn) + L-glutamine + ATP + H2O = L-asparaginyl-tRNA(Asn) + L-glutamate + ADP + phosphate + 2 H(+). Its function is as follows. Allows the formation of correctly charged Asn-tRNA(Asn) or Gln-tRNA(Gln) through the transamidation of misacylated Asp-tRNA(Asn) or Glu-tRNA(Gln) in organisms which lack either or both of asparaginyl-tRNA or glutaminyl-tRNA synthetases. The reaction takes place in the presence of glutamine and ATP through an activated phospho-Asp-tRNA(Asn) or phospho-Glu-tRNA(Gln). The polypeptide is Aspartyl/glutamyl-tRNA(Asn/Gln) amidotransferase subunit B (Lachnoclostridium phytofermentans (strain ATCC 700394 / DSM 18823 / ISDg) (Clostridium phytofermentans)).